The chain runs to 421 residues: 26S proteasome non-ATPase regulatory subunit 11A (421 aa).

Positions 227–391 (AYSYFYEAFE…GVLIVFDEPP (165 aa)) constitute a PCI domain.

This sequence belongs to the proteasome subunit S9 family. As to quaternary structure, component of the lid subcomplex of the 19S proteasome regulatory particle complex (also named PA700 complex). The 26S proteasome consists of a 20S proteasome core and two 19S regulatory subunits.

Its subcellular location is the nucleus. The protein resides in the cytoplasm. The protein localises to the cytosol. Component of the lid subcomplex of the 26S proteasome, a multiprotein complex involved in the ATP-dependent degradation of ubiquitinated proteins. In the complex, psmd11a is required for proteasome assembly. This is 26S proteasome non-ATPase regulatory subunit 11A (psmd11a) from Danio rerio (Zebrafish).